Reading from the N-terminus, the 107-residue chain is MVIRVFIASSSGFVAIKKKQQDVVRFLEANKIEFEEVDITMSEEQRQWMYKNVPLEKKPTQGNPLPPQIFNGDRYCGDYDSFFESKESNTVFSFLGLKPRLASKAEP.

Positions 61 to 67 (QGNPLPP) match the SH3-binding motif.

This sequence belongs to the SH3BGR family.

Its subcellular location is the nucleus. This chain is SH3 domain-binding glutamic acid-rich-like protein 2 (SH3BGRL2), found in Pongo abelii (Sumatran orangutan).